The primary structure comprises 92 residues: Putative phosphotransferase enzyme IIB component BB_0367 (92 aa).

The 83-residue stretch at Ile10–Gln92 folds into the PTS EIIB type-1 domain.

The protein localises to the cytoplasm. Its function is as follows. The phosphoenolpyruvate-dependent sugar phosphotransferase system (PTS), a major carbohydrate active -transport system, catalyzes the phosphorylation of incoming sugar substrates concomitant with their translocation across the cell membrane. The sequence is that of Putative phosphotransferase enzyme IIB component BB_0367 from Borreliella burgdorferi (strain ATCC 35210 / DSM 4680 / CIP 102532 / B31) (Borrelia burgdorferi).